The chain runs to 504 residues: Glycerol kinase (504 aa).

Thr-14 is a binding site for ADP. The ATP site is built by Thr-14, Thr-15, and Ser-16. Thr-14 is a sn-glycerol 3-phosphate binding site. Position 18 (Arg-18) interacts with ADP. Sn-glycerol 3-phosphate-binding residues include Arg-84, Glu-85, Tyr-136, and Asp-246. Residues Arg-84, Glu-85, Tyr-136, Asp-246, and Gln-247 each coordinate glycerol. ADP-binding residues include Thr-268 and Gly-311. ATP-binding residues include Thr-268, Gly-311, Gln-315, and Gly-412. ADP-binding residues include Gly-412 and Asn-416.

The protein belongs to the FGGY kinase family.

It catalyses the reaction glycerol + ATP = sn-glycerol 3-phosphate + ADP + H(+). Its pathway is polyol metabolism; glycerol degradation via glycerol kinase pathway; sn-glycerol 3-phosphate from glycerol: step 1/1. With respect to regulation, inhibited by fructose 1,6-bisphosphate (FBP). In terms of biological role, key enzyme in the regulation of glycerol uptake and metabolism. Catalyzes the phosphorylation of glycerol to yield sn-glycerol 3-phosphate. This is Glycerol kinase from Aliivibrio fischeri (strain ATCC 700601 / ES114) (Vibrio fischeri).